Reading from the N-terminus, the 408-residue chain is LL-diaminopimelate aminotransferase (408 aa).

Substrate contacts are provided by Y15 and G42. Pyridoxal 5'-phosphate is bound by residues Y72, 108–109 (SK), Y132, N187, Y218, and 246–248 (SFS). The substrate site is built by K109, Y132, and N187. K249 is modified (N6-(pyridoxal phosphate)lysine). Positions 257 and 292 each coordinate pyridoxal 5'-phosphate. Substrate is bound by residues N292 and R388.

It belongs to the class-I pyridoxal-phosphate-dependent aminotransferase family. LL-diaminopimelate aminotransferase subfamily. Homodimer. It depends on pyridoxal 5'-phosphate as a cofactor.

The catalysed reaction is (2S,6S)-2,6-diaminopimelate + 2-oxoglutarate = (S)-2,3,4,5-tetrahydrodipicolinate + L-glutamate + H2O + H(+). The protein operates within amino-acid biosynthesis; L-lysine biosynthesis via DAP pathway; LL-2,6-diaminopimelate from (S)-tetrahydrodipicolinate (aminotransferase route): step 1/1. Its function is as follows. Involved in the synthesis of meso-diaminopimelate (m-DAP or DL-DAP), required for both lysine and peptidoglycan biosynthesis. Catalyzes the direct conversion of tetrahydrodipicolinate to LL-diaminopimelate. This is LL-diaminopimelate aminotransferase from Synechococcus sp. (strain CC9902).